Reading from the N-terminus, the 492-residue chain is Probable Xaa-Pro aminopeptidase ACLA_020440 (492 aa).

Positions 272, 283, 421, and 460 each coordinate Mn(2+).

It belongs to the peptidase M24B family. It depends on Mn(2+) as a cofactor.

The enzyme catalyses Release of any N-terminal amino acid, including proline, that is linked to proline, even from a dipeptide or tripeptide.. Its function is as follows. Catalyzes the removal of a penultimate prolyl residue from the N-termini of peptides. The sequence is that of Probable Xaa-Pro aminopeptidase ACLA_020440 from Aspergillus clavatus (strain ATCC 1007 / CBS 513.65 / DSM 816 / NCTC 3887 / NRRL 1 / QM 1276 / 107).